The chain runs to 431 residues: Probable zinc metalloprotease Lema_P086240 (431 aa).

Asparagine 46 carries N-linked (GlcNAc...) asparagine glycosylation. The Zn(2+) site is built by histidine 117, aspartate 137, and glutamate 170. A glycan (N-linked (GlcNAc...) asparagine) is linked at asparagine 185. Aspartate 197 contributes to the Zn(2+) binding site. 5 N-linked (GlcNAc...) asparagine glycosylation sites follow: asparagine 258, asparagine 310, asparagine 349, asparagine 359, and asparagine 369. One can recognise a Fibronectin type-III domain in the interval 344–431 (PGMPRNVTID…KSPAVYPFPG (88 aa)).

Belongs to the peptidase M28 family. M28B subfamily. The cofactor is Zn(2+).

It is found in the secreted. This Leptosphaeria maculans (strain JN3 / isolate v23.1.3 / race Av1-4-5-6-7-8) (Blackleg fungus) protein is Probable zinc metalloprotease Lema_P086240.